The sequence spans 406 residues: Tryptophan synthase beta chain (406 aa).

At K99 the chain carries N6-(pyridoxal phosphate)lysine.

This sequence belongs to the TrpB family. In terms of assembly, tetramer of two alpha and two beta chains. The cofactor is pyridoxal 5'-phosphate.

The catalysed reaction is (1S,2R)-1-C-(indol-3-yl)glycerol 3-phosphate + L-serine = D-glyceraldehyde 3-phosphate + L-tryptophan + H2O. It participates in amino-acid biosynthesis; L-tryptophan biosynthesis; L-tryptophan from chorismate: step 5/5. Functionally, the beta subunit is responsible for the synthesis of L-tryptophan from indole and L-serine. In Chelativorans sp. (strain BNC1), this protein is Tryptophan synthase beta chain.